Here is a 201-residue protein sequence, read N- to C-terminus: Ras-related protein Rab-9A (201 aa).

Position 2 is an N-acetylalanine (Ala2). GTP contacts are provided by Gly17, Val18, Gly19, Lys20, Ser21, Ser22, Ser34, His38, and Thr39. Ser21 provides a ligand contact to Mg(2+). The Switch 1 motif lies at 31-42; that stretch reads KFDSQLFHTIGV. The residue at position 34 (Ser34) is a Phosphoserine. Mg(2+)-binding residues include Thr39 and Asp62. A Switch 2 motif is present at residues 64-78; that stretch reads AGQERFRSLRTPFYR. The GTP site is built by Gly65, Asn124, Lys125, Asp127, and Lys156. The residue at position 179 (Ser179) is a Phosphoserine. Thr187 is subject to Phosphothreonine. 2 S-geranylgeranyl cysteine lipidation sites follow: Cys200 and Cys201.

Belongs to the small GTPase superfamily. Rab family. As to quaternary structure, interacts (preferentially in its GTP-bound form) with GCC2 (via its GRIP domain). Interacts (GTP-bound form) with SGSM1; the GDP-bound form has much lower affinity for SGSM1. Interacts with SGSM2. The GTP-bound form but not the GDP-bound form interacts with HPS4 and the BLOC-3 complex (heterodimer of HPS1 and HPS4) but does not interact with HPS1 alone. Interacts (GTP-bound form) with NDE1; two RAB9A-GTP molecules lie on the opposite sides of the NDE1 homodimer; the interaction leads to RAB9A-dynein motor tethering. Interacts (GTP-bound form) with NDEL1. Requires Mg(2+) as cofactor.

Its subcellular location is the cell membrane. It localises to the endoplasmic reticulum membrane. The protein localises to the golgi apparatus membrane. It is found in the late endosome. The protein resides in the cytoplasmic vesicle. Its subcellular location is the phagosome membrane. It localises to the phagosome. The protein localises to the cytoplasmic vesicle membrane. It is found in the melanosome. It catalyses the reaction GTP + H2O = GDP + phosphate + H(+). Regulated by guanine nucleotide exchange factors (GEFs) which promote the exchange of bound GDP for free GTP. Regulated by GTPase activating proteins (GAPs) which increase the GTP hydrolysis activity. Inhibited by GDP dissociation inhibitors (GDIs). Its function is as follows. The small GTPases Rab are key regulators of intracellular membrane trafficking, from the formation of transport vesicles to their fusion with membranes. Rabs cycle between an inactive GDP-bound form and an active GTP-bound form that is able to recruit to membranes different sets of downstream effectors directly responsible for vesicle formation, movement, tethering and fusion. RAB9A is involved in the transport of proteins between the endosomes and the trans-Golgi network (TGN). Specifically uses NDE1/NDEL1 as an effector to interact with the dynein motor complex in order to control retrograde trafficking of RAB9-associated late endosomes to the TGN. Involved in the recruitment of SGSM2 to melanosomes and is required for the proper trafficking of melanogenic enzymes TYR, TYRP1 and DCT/TYRP2 to melanosomes in melanocytes. This chain is Ras-related protein Rab-9A, found in Rattus norvegicus (Rat).